The primary structure comprises 296 residues: Acetylglutamate kinase (296 aa).

Residues 68–69 (GG), Arg-90, and Asn-193 contribute to the substrate site.

The protein belongs to the acetylglutamate kinase family. ArgB subfamily.

Its subcellular location is the cytoplasm. The catalysed reaction is N-acetyl-L-glutamate + ATP = N-acetyl-L-glutamyl 5-phosphate + ADP. It functions in the pathway amino-acid biosynthesis; L-arginine biosynthesis; N(2)-acetyl-L-ornithine from L-glutamate: step 2/4. Functionally, catalyzes the ATP-dependent phosphorylation of N-acetyl-L-glutamate. The chain is Acetylglutamate kinase from Acidothermus cellulolyticus (strain ATCC 43068 / DSM 8971 / 11B).